The following is a 249-amino-acid chain: Probable transcriptional regulatory protein Psyc_0938 (249 aa).

Belongs to the TACO1 family.

Its subcellular location is the cytoplasm. The chain is Probable transcriptional regulatory protein Psyc_0938 from Psychrobacter arcticus (strain DSM 17307 / VKM B-2377 / 273-4).